The primary structure comprises 83 residues: Exodeoxyribonuclease 7 small subunit (83 aa).

This sequence belongs to the XseB family. Heterooligomer composed of large and small subunits.

The protein resides in the cytoplasm. It catalyses the reaction Exonucleolytic cleavage in either 5'- to 3'- or 3'- to 5'-direction to yield nucleoside 5'-phosphates.. In terms of biological role, bidirectionally degrades single-stranded DNA into large acid-insoluble oligonucleotides, which are then degraded further into small acid-soluble oligonucleotides. The sequence is that of Exodeoxyribonuclease 7 small subunit from Allorhizobium ampelinum (strain ATCC BAA-846 / DSM 112012 / S4) (Agrobacterium vitis (strain S4)).